The sequence spans 328 residues: Helicase VP6-A (328 aa).

2 disordered regions span residues Asp-31–Asn-128 and Val-180–Ile-237. Basic and acidic residues-rich tracts occupy residues Glu-36–Asn-61, Ala-71–Ile-83, and Pro-96–Gly-109. Residue Lys-110 participates in ATP binding. A compositionally biased stretch (gly residues) spans Lys-110–Asn-128. 2 stretches are compositionally biased toward basic and acidic residues: residues Val-180–Arg-205 and Pro-214–Glu-230.

Belongs to the orbivirus VP6 family. As to quaternary structure, homohexamer.

The protein localises to the virion. The catalysed reaction is ATP + H2O = ADP + phosphate + H(+). Functionally, ATP dependent RNA helicase essential for RNA packaging and viral transcription. Possesses ss- and dsRNA-binding capacity. The sequence is that of Helicase VP6-A (Segment-9) from Bluetongue virus 1 (isolate South Africa) (BTV 1).